We begin with the raw amino-acid sequence, 474 residues long: Cysteine--tRNA ligase (474 aa).

Zn(2+) is bound at residue C27. Positions 29 to 39 (PTVYNYIHIGN) match the 'HIGH' region motif. 3 residues coordinate Zn(2+): C212, H237, and E241. The 'KMSKS' region motif lies at 271-275 (KMSKS). K274 contributes to the ATP binding site.

It belongs to the class-I aminoacyl-tRNA synthetase family. In terms of assembly, monomer. Zn(2+) serves as cofactor.

The protein resides in the cytoplasm. It carries out the reaction tRNA(Cys) + L-cysteine + ATP = L-cysteinyl-tRNA(Cys) + AMP + diphosphate. The sequence is that of Cysteine--tRNA ligase from Lactobacillus delbrueckii subsp. bulgaricus (strain ATCC 11842 / DSM 20081 / BCRC 10696 / JCM 1002 / NBRC 13953 / NCIMB 11778 / NCTC 12712 / WDCM 00102 / Lb 14).